The sequence spans 932 residues: Protocadherin gamma-A9 (932 aa).

Residues 1–28 (MAAPTKCQLRGRLVLLCSLLGMLWEARA) form the signal peptide. 6 Cadherin domains span residues 29 to 133 (SQIR…APKF), 134 to 242 (QAES…APVF), 243 to 347 (AQRI…RPEV), 348 to 452 (TITS…PPAF), 453 to 562 (SQAS…APEI), and 570 to 683 (DGST…IPAD). Topologically, residues 29-692 (SQIRYSVPEE…DLEASDLTLY (664 aa)) are extracellular. Residues Asn-47 and Asn-127 are each glycosylated (N-linked (GlcNAc...) asparagine). N-linked (GlcNAc...) asparagine glycosylation is found at Asn-389, Asn-419, and Asn-545. Residues 693–713 (LVVAVAVVSCVFLTFVITLLA) traverse the membrane as a helical segment. The Cytoplasmic portion of the chain corresponds to 714–932 (LRLRHWHSSH…KKKSGKKEKK (219 aa)). Disordered stretches follow at residues 803-841 (DTPLVPQAPPNTDWRFSQAQRPGTSGSQNGDDTGTWPNN) and 902-932 (ATLTNAAGKRDGKAPAGGNGNKKKSGKKEKK). Residues 816-841 (WRFSQAQRPGTSGSQNGDDTGTWPNN) are compositionally biased toward polar residues. The span at 922 to 932 (NKKKSGKKEKK) shows a compositional bias: basic residues.

The protein resides in the cell membrane. Potential calcium-dependent cell-adhesion protein. May be involved in the establishment and maintenance of specific neuronal connections in the brain. The polypeptide is Protocadherin gamma-A9 (PCDHGA9) (Homo sapiens (Human)).